The following is a 488-amino-acid chain: Putative BTB/POZ domain-containing protein L674 (488 aa).

A BTB domain is found at 83-150 (NIVYFNIGGK…VKNQKCPINN (68 aa)).

This sequence belongs to the mimivirus BTB/WD family.

The sequence is that of Putative BTB/POZ domain-containing protein L674 from Acanthamoeba polyphaga (Amoeba).